The primary structure comprises 605 residues: F-box/WD repeat-containing protein 1A (605 aa).

A homodimerization domain D region spans residues 128 to 177 (ASYEKEKELCVKYFEQWSESDQVEFVEHLISQMCHYQHGHINSYLKPMLQ). One can recognise an F-box domain in the interval 182-228 (TALPARGLDHIAENILSYLDAKSLCAAELVCKEWYRVTSDGMLWKKL). Residues 190-228 (DHIAENILSYLDAKSLCAAELVCKEWYRVTSDGMLWKKL) form a required for down-regulation of SNAI1 region. WD repeat units lie at residues 301 to 338 (ETSK…CKRI), 341 to 378 (GHTG…MLNT), 381 to 418 (HHCE…DITL), 424 to 461 (GHRA…FVRT), 464 to 503 (GHKR…RVLE), 505 to 541 (HEEL…DPRA), and 553 to 590 (EHSG…AAHA).

As to quaternary structure, homodimer. Self-associates. Component of the SCF(BTRC) complex, composed of SKP1, CUL1 and BTRC. Direct interaction with SKP1 with SKP1 occurs via the F-box domain. Interacts with phosphorylated ubiquitination substrates SMAD3 and SMAD4. Interacts with phosphorylated ubiquitination substrates CTNNB1, NFKBIA, NFKBIB, NFKBIE, NFKB1/nuclear factor NF-kappa-B p105 subunit, ATF4, CDC25A, DLG1, FBXO5 and SNAI1; the interaction requires the phosphorylation of the 2 serine residues in the substrate destruction motif D-S-G-X(2,3,4)-S. Binds UBQLN1. Interacts with CDC34 and UBE2R2. Interacts with FBXW11. Interacts with CUL4A and DDB1. Part of a SCF(BTRC)-like complex lacking CUL1, which is associated with phosphorylated NKBIA and RELA; RELA interacts directly with NFKBIA. Interacts with the phosphorylated form of GLI3. Interacts with CLU. Interacts with PER1 (phosphorylated), PER2 (phosphorylated) and PER3. Interacts with phosphorylated ubiquitination substrate CEP68. Interacts with ZC3H12A; this interaction occurs when ZC3H12A is phosphorylated in a IKBKB/IKKB-dependent manner. Interacts with HSF1; this interaction occurs during mitosis and induces HSF1 ubiquitin-dependent degradation, a process inhibited by CDC20. Interacts with NFE2L1. Interacts with INAVA. Interacts with IL10RA; this interaction leads to IL10RA ubiquitination and subsequent degradation. Interacts with REST. Interacts with KLF4; this interaction leads to KLF4 ubiquitination and subsequent degradation. Interacts with UBR2, as part of a SCF(BTRC) complex; the interaction mediates 'Lys-48'-linked ubiquitination of UBR2 and is regulated by DUSP22 in the T-cell receptor signaling pathway. Post-translationally, ubiquitinated via 'Lys-11'-linked polyubiquitin by some cullin-5-RING E3 ubiquitin-protein ligase complex (ECS complex), leading to its degradation. Deubiquitinated by OTUD5, promoting its stability. As to expression, expressed in heart, brain, liver, skeletal muscle and, most strongly, in testis.

The protein resides in the cytoplasm. Its subcellular location is the nucleus. Its pathway is protein modification; protein ubiquitination. Its function is as follows. Substrate recognition component of a SCF (SKP1-CUL1-F-box protein) E3 ubiquitin-protein ligase complex which mediates the ubiquitination and subsequent proteasomal degradation of target proteins. Recognizes and binds to phosphorylated target proteins. SCF(BTRC) mediates the ubiquitination of phosphorylated NFKB, ATF4, CDC25A, DLG1, FBXO5, PER1, SMAD3, SMAD4, SNAI1 and probably NFKB2. SCF(BTRC) mediates the ubiquitination of CTNNB1 and participates in Wnt signaling. SCF(BTRC) mediates the ubiquitination of NFKBIA, NFKBIB and NFKBIE; the degradation frees the associated NFKB1 to translocate into the nucleus and to activate transcription. Ubiquitination of NFKBIA occurs at 'Lys-21' and 'Lys-22'. The SCF(FBXW11) complex also regulates NF-kappa-B by mediating ubiquitination of phosphorylated NFKB1: specifically ubiquitinates the p105 form of NFKB1, leading to its degradation. SCF(BTRC) mediates the ubiquitination of CEP68; this is required for centriole separation during mitosis. SCF(BTRC) mediates the ubiquitination and subsequent degradation of nuclear NFE2L1. Has an essential role in the control of the clock-dependent transcription via degradation of phosphorylated PER1 and PER2. May be involved in ubiquitination and subsequent proteasomal degradation through a DBB1-CUL4 E3 ubiquitin-protein ligase. Required for activation of NFKB-mediated transcription by IL1B, MAP3K14, MAP3K1, IKBKB and TNF. Required for proteolytic processing of GLI3. Mediates ubiquitination of REST, thereby leading to its proteasomal degradation. SCF(BTRC) mediates the ubiquitination and subsequent proteasomal degradation of KLF4; thereby negatively regulating cell pluripotency maintenance and embryogenesis. SCF(BTRC) acts as a regulator of mTORC1 signaling pathway by catalyzing ubiquitination and subsequent proteasomal degradation of phosphorylated DEPTOR, TFE3 and MITF. SCF(BTRC) directs 'Lys-48'-linked ubiquitination of UBR2 in the T-cell receptor signaling pathway. The protein is F-box/WD repeat-containing protein 1A of Mus musculus (Mouse).